The following is a 489-amino-acid chain: Betaine aldehyde dehydrogenase (489 aa).

K(+) contacts are provided by Thr-26 and Asp-93. 150 to 152 (GAW) is a binding site for NAD(+). Lys-162 (charge relay system) is an active-site residue. 176-179 (KPSE) is an NAD(+) binding site. A K(+)-binding site is contributed by Val-180. NAD(+) is bound at residue 229 to 232 (GVET). K(+) is bound at residue Leu-245. Glu-251 functions as the Proton acceptor in the catalytic mechanism. 3 residues coordinate NAD(+): Gly-253, Cys-285, and Glu-386. The active-site Nucleophile is Cys-285. Cys-285 is modified (cysteine sulfenic acid (-SOH)). Residues Lys-456 and Gly-459 each coordinate K(+). The Charge relay system role is filled by Glu-463.

This sequence belongs to the aldehyde dehydrogenase family. In terms of assembly, dimer of dimers. The cofactor is K(+).

The enzyme catalyses betaine aldehyde + NAD(+) + H2O = glycine betaine + NADH + 2 H(+). Its pathway is amine and polyamine biosynthesis; betaine biosynthesis via choline pathway; betaine from betaine aldehyde: step 1/1. Its function is as follows. Involved in the biosynthesis of the osmoprotectant glycine betaine. Catalyzes the irreversible oxidation of betaine aldehyde to the corresponding acid. The polypeptide is Betaine aldehyde dehydrogenase (Burkholderia orbicola (strain MC0-3)).